Reading from the N-terminus, the 370-residue chain is Putative glutamate--cysteine ligase 2 (370 aa).

This sequence belongs to the glutamate--cysteine ligase type 2 family. YbdK subfamily.

The catalysed reaction is L-cysteine + L-glutamate + ATP = gamma-L-glutamyl-L-cysteine + ADP + phosphate + H(+). Its function is as follows. ATP-dependent carboxylate-amine ligase which exhibits weak glutamate--cysteine ligase activity. In Methylibium petroleiphilum (strain ATCC BAA-1232 / LMG 22953 / PM1), this protein is Putative glutamate--cysteine ligase 2.